Here is a 388-residue protein sequence, read N- to C-terminus: 3-ketoacyl-CoA thiolase (388 aa).

C91 functions as the Acyl-thioester intermediate in the catalytic mechanism. Catalysis depends on proton acceptor residues H343 and C373.

This sequence belongs to the thiolase-like superfamily. Thiolase family. As to quaternary structure, heterotetramer of two alpha chains (FadB) and two beta chains (FadA).

It localises to the cytoplasm. The catalysed reaction is an acyl-CoA + acetyl-CoA = a 3-oxoacyl-CoA + CoA. It participates in lipid metabolism; fatty acid beta-oxidation. Functionally, catalyzes the final step of fatty acid oxidation in which acetyl-CoA is released and the CoA ester of a fatty acid two carbons shorter is formed. The sequence is that of 3-ketoacyl-CoA thiolase from Photorhabdus laumondii subsp. laumondii (strain DSM 15139 / CIP 105565 / TT01) (Photorhabdus luminescens subsp. laumondii).